Consider the following 145-residue polypeptide: Putative antiporter subunit mnhG2 (145 aa).

Transmembrane regions (helical) follow at residues 11–31 (IAAVMLLLGSFIALISAIGIV), 51–71 (VLLTLIGVLIYFIVNTGFFSV), and 72–92 (RLLLSLVFINLTSPVGMHLVA).

It belongs to the CPA3 antiporters (TC 2.A.63) subunit G family. As to quaternary structure, may form a heterooligomeric complex that consists of seven subunits: mnhA2, mnhB2, mnhC2, mnhD2, mnhE2, mnhF2 and mnhG2.

Its subcellular location is the cell membrane. The polypeptide is Putative antiporter subunit mnhG2 (mnhG2) (Staphylococcus aureus (strain MRSA252)).